Here is an 89-residue protein sequence, read N- to C-terminus: MTVKPLGNRLLIKPITEERKTEGGIVLPDSAKEKPQKAEVKEVGKLDEDYDLKVGDKVIFSKYAGTEIKIDDEDYIIIDVEDVLAKVED.

It belongs to the GroES chaperonin family. As to quaternary structure, heptamer of 7 subunits arranged in a ring. Interacts with the chaperonin GroEL.

It localises to the cytoplasm. Together with the chaperonin GroEL, plays an essential role in assisting protein folding. The GroEL-GroES system forms a nano-cage that allows encapsulation of the non-native substrate proteins and provides a physical environment optimized to promote and accelerate protein folding. GroES binds to the apical surface of the GroEL ring, thereby capping the opening of the GroEL channel. This chain is Co-chaperonin GroES, found in Petrotoga mobilis (strain DSM 10674 / SJ95).